Consider the following 154-residue polypeptide: Deoxyuridine 5'-triphosphate nucleotidohydrolase (154 aa).

Substrate-binding positions include 72-74 (RSG), asparagine 85, 89-91 (LID), and methionine 99.

This sequence belongs to the dUTPase family. Requires Mg(2+) as cofactor.

It catalyses the reaction dUTP + H2O = dUMP + diphosphate + H(+). The protein operates within pyrimidine metabolism; dUMP biosynthesis; dUMP from dCTP (dUTP route): step 2/2. This enzyme is involved in nucleotide metabolism: it produces dUMP, the immediate precursor of thymidine nucleotides and it decreases the intracellular concentration of dUTP so that uracil cannot be incorporated into DNA. This chain is Deoxyuridine 5'-triphosphate nucleotidohydrolase, found in Psychrobacter arcticus (strain DSM 17307 / VKM B-2377 / 273-4).